We begin with the raw amino-acid sequence, 475 residues long: Methylenetetrahydrofolate--tRNA-(uracil-5-)-methyltransferase TrmFO (475 aa).

Position 9–14 (9–14) interacts with FAD; sequence GGGLAG. A disordered region spans residues 427–447; sequence APRNETGRRLRGPEKAALKKR.

It belongs to the MnmG family. TrmFO subfamily. It depends on FAD as a cofactor.

Its subcellular location is the cytoplasm. The catalysed reaction is uridine(54) in tRNA + (6R)-5,10-methylene-5,6,7,8-tetrahydrofolate + NADH + H(+) = 5-methyluridine(54) in tRNA + (6S)-5,6,7,8-tetrahydrofolate + NAD(+). The enzyme catalyses uridine(54) in tRNA + (6R)-5,10-methylene-5,6,7,8-tetrahydrofolate + NADPH + H(+) = 5-methyluridine(54) in tRNA + (6S)-5,6,7,8-tetrahydrofolate + NADP(+). In terms of biological role, catalyzes the folate-dependent formation of 5-methyl-uridine at position 54 (M-5-U54) in all tRNAs. The chain is Methylenetetrahydrofolate--tRNA-(uracil-5-)-methyltransferase TrmFO from Methylobacterium radiotolerans (strain ATCC 27329 / DSM 1819 / JCM 2831 / NBRC 15690 / NCIMB 10815 / 0-1).